The primary structure comprises 247 residues: ATP synthase subunit a, chloroplastic (247 aa).

The next 5 helical transmembrane spans lie at 38 to 58 (QVLI…TIAV), 95 to 115 (VPFI…GALL), 134 to 154 (INTT…AGLT), 199 to 219 (LVVV…VMLL), and 220 to 240 (GLFT…AYIG).

Belongs to the ATPase A chain family. F-type ATPases have 2 components, CF(1) - the catalytic core - and CF(0) - the membrane proton channel. CF(1) has five subunits: alpha(3), beta(3), gamma(1), delta(1), epsilon(1). CF(0) has four main subunits: a, b, b' and c.

The protein resides in the plastid. It localises to the chloroplast thylakoid membrane. Functionally, key component of the proton channel; it plays a direct role in the translocation of protons across the membrane. The chain is ATP synthase subunit a, chloroplastic from Nicotiana sylvestris (Wood tobacco).